The primary structure comprises 324 residues: MSTTENAAIEPVTGADAEVLLAQPRGFCAGVDRAIEIVERALQRFGAPIYVRHEIVHNAYVVSDLRSKGAVFVQELDDVPVGGTVIFSAHGVSRAVRQAAEARGLRVFDATCPLVTKVHVEVSKMRTQGFEIIMIGHKGHPEVEGTMGQADDGMLLVESVDDVARLAVKDPARLAYVTQTTLSVDETQEIVAAIKARFPAVHEPKKQDICYATQNRQDAVKFMAPQVEVVIVVGSPNSSNSNRLRELAEKLGVPAYMVDTPEQVRPEWLAGKRRVGLTAGASAPEELAQSIVDRLRALGARSVRPLDGIQENMSFPLPRGLQIN.

A [4Fe-4S] cluster-binding site is contributed by Cys-28. His-57 and His-90 together coordinate (2E)-4-hydroxy-3-methylbut-2-enyl diphosphate. Residues His-57 and His-90 each contribute to the dimethylallyl diphosphate site. Isopentenyl diphosphate-binding residues include His-57 and His-90. Position 112 (Cys-112) interacts with [4Fe-4S] cluster. His-140 is a (2E)-4-hydroxy-3-methylbut-2-enyl diphosphate binding site. His-140 provides a ligand contact to dimethylallyl diphosphate. Position 140 (His-140) interacts with isopentenyl diphosphate. Glu-142 acts as the Proton donor in catalysis. (2E)-4-hydroxy-3-methylbut-2-enyl diphosphate is bound at residue Thr-180. Cys-210 lines the [4Fe-4S] cluster pocket. Residues Ser-238, Ser-239, Asn-240, and Ser-282 each coordinate (2E)-4-hydroxy-3-methylbut-2-enyl diphosphate. Positions 238, 239, 240, and 282 each coordinate dimethylallyl diphosphate. Isopentenyl diphosphate contacts are provided by Ser-238, Ser-239, Asn-240, and Ser-282.

Belongs to the IspH family. [4Fe-4S] cluster serves as cofactor.

It carries out the reaction isopentenyl diphosphate + 2 oxidized [2Fe-2S]-[ferredoxin] + H2O = (2E)-4-hydroxy-3-methylbut-2-enyl diphosphate + 2 reduced [2Fe-2S]-[ferredoxin] + 2 H(+). The enzyme catalyses dimethylallyl diphosphate + 2 oxidized [2Fe-2S]-[ferredoxin] + H2O = (2E)-4-hydroxy-3-methylbut-2-enyl diphosphate + 2 reduced [2Fe-2S]-[ferredoxin] + 2 H(+). The protein operates within isoprenoid biosynthesis; dimethylallyl diphosphate biosynthesis; dimethylallyl diphosphate from (2E)-4-hydroxy-3-methylbutenyl diphosphate: step 1/1. It participates in isoprenoid biosynthesis; isopentenyl diphosphate biosynthesis via DXP pathway; isopentenyl diphosphate from 1-deoxy-D-xylulose 5-phosphate: step 6/6. In terms of biological role, catalyzes the conversion of 1-hydroxy-2-methyl-2-(E)-butenyl 4-diphosphate (HMBPP) into a mixture of isopentenyl diphosphate (IPP) and dimethylallyl diphosphate (DMAPP). Acts in the terminal step of the DOXP/MEP pathway for isoprenoid precursor biosynthesis. The polypeptide is 4-hydroxy-3-methylbut-2-enyl diphosphate reductase (Ralstonia nicotianae (strain ATCC BAA-1114 / GMI1000) (Ralstonia solanacearum)).